A 243-amino-acid polypeptide reads, in one-letter code: Eukaryotic translation initiation factor 4E-2 (243 aa).

It belongs to the eukaryotic initiation factor 4E family. As to quaternary structure, eIF4F is a multi-subunit complex, the composition of which varies with external and internal environmental conditions. It is composed of at least eIF4A, eIF4E and eIF4G. eIF4E is also known to interact with other partners.

Functionally, recognizes and binds the 7-methylguanosine-containing mRNA cap during an early step in the initiation of protein synthesis and facilitates ribosome binding by inducing the unwinding of the mRNAs secondary structures. This is Eukaryotic translation initiation factor 4E-2 (tif452) from Schizosaccharomyces pombe (strain 972 / ATCC 24843) (Fission yeast).